A 467-amino-acid chain; its full sequence is A-type ATP synthase subunit B (467 aa).

Positions 95-114 are disordered; sequence GKGQPRDHMPLPPPEDFRDV.

Belongs to the ATPase alpha/beta chains family. In terms of assembly, has multiple subunits with at least A(3), B(3), C, D, E, F, H, I and proteolipid K(x).

Its subcellular location is the cell membrane. Component of the A-type ATP synthase that produces ATP from ADP in the presence of a proton gradient across the membrane. The B chain is a regulatory subunit. The sequence is that of A-type ATP synthase subunit B from Pyrobaculum islandicum (strain DSM 4184 / JCM 9189 / GEO3).